We begin with the raw amino-acid sequence, 173 residues long: NADH-ubiquinone oxidoreductase chain 6 (173 aa).

5 consecutive transmembrane segments (helical) span residues 1–21, 27–47, 48–68, 87–107, and 139–159; these read MTYF…AVAS, YGVV…LSLG, VSFV…VVFV, VVGY…IGGF, and CGVG…FVVL.

Belongs to the complex I subunit 6 family.

It is found in the mitochondrion membrane. It catalyses the reaction a ubiquinone + NADH + 5 H(+)(in) = a ubiquinol + NAD(+) + 4 H(+)(out). Its function is as follows. Core subunit of the mitochondrial membrane respiratory chain NADH dehydrogenase (Complex I) that is believed to belong to the minimal assembly required for catalysis. Complex I functions in the transfer of electrons from NADH to the respiratory chain. The immediate electron acceptor for the enzyme is believed to be ubiquinone. The polypeptide is NADH-ubiquinone oxidoreductase chain 6 (MT-ND6) (Cepphus columba (Pigeon guillemot)).